The primary structure comprises 1070 residues: Carbamoyl phosphate synthase large chain (1070 aa).

Positions 1–399 (MPKREDIKKV…SLLKAFKSLD (399 aa)) are carboxyphosphate synthetic domain. ATP is bound by residues R129, R169, G175, G176, E208, V210, E215, G241, V242, H243, Q284, and E296. The 193-residue stretch at 133 to 325 (KETMLRIGEK…IARVTAKIAI (193 aa)) folds into the ATP-grasp 1 domain. The Mg(2+) site is built by Q284, E296, and N298. 3 residues coordinate Mn(2+): Q284, E296, and N298. The segment at 400–540 (IDSQLGNKRW…YSTYEDTCET (141 aa)) is oligomerization domain. The segment at 541–931 (NPTDRKKILI…YKAELAADNL (391 aa)) is carbamoyl phosphate synthetic domain. An ATP-grasp 2 domain is found at 672–863 (YVLMQKFGIL…LAKIAARVIA (192 aa)). ATP is bound by residues R708, D747, L749, E754, G779, V780, H781, S782, Q822, and E834. The Mg(2+) site is built by Q822, E834, and N836. Mn(2+)-binding residues include Q822, E834, and N836. In terms of domain architecture, MGS-like spans 930-1070 (NLLPLTGKVF…INEYHKEMGL (141 aa)). Positions 932 to 1070 (LPLTGKVFLS…INEYHKEMGL (139 aa)) are allosteric domain.

Belongs to the CarB family. In terms of assembly, composed of two chains; the small (or glutamine) chain promotes the hydrolysis of glutamine to ammonia, which is used by the large (or ammonia) chain to synthesize carbamoyl phosphate. Tetramer of heterodimers (alpha,beta)4. Mg(2+) is required as a cofactor. It depends on Mn(2+) as a cofactor.

The enzyme catalyses hydrogencarbonate + L-glutamine + 2 ATP + H2O = carbamoyl phosphate + L-glutamate + 2 ADP + phosphate + 2 H(+). The catalysed reaction is hydrogencarbonate + NH4(+) + 2 ATP = carbamoyl phosphate + 2 ADP + phosphate + 2 H(+). The protein operates within amino-acid biosynthesis; L-arginine biosynthesis; carbamoyl phosphate from bicarbonate: step 1/1. Its pathway is pyrimidine metabolism; UMP biosynthesis via de novo pathway; (S)-dihydroorotate from bicarbonate: step 1/3. Large subunit of the glutamine-dependent carbamoyl phosphate synthetase (CPSase). CPSase catalyzes the formation of carbamoyl phosphate from the ammonia moiety of glutamine, carbonate, and phosphate donated by ATP, constituting the first step of 2 biosynthetic pathways, one leading to arginine and/or urea and the other to pyrimidine nucleotides. The large subunit (synthetase) binds the substrates ammonia (free or transferred from glutamine from the small subunit), hydrogencarbonate and ATP and carries out an ATP-coupled ligase reaction, activating hydrogencarbonate by forming carboxy phosphate which reacts with ammonia to form carbamoyl phosphate. The protein is Carbamoyl phosphate synthase large chain of Methanosarcina acetivorans (strain ATCC 35395 / DSM 2834 / JCM 12185 / C2A).